Reading from the N-terminus, the 1076-residue chain is JmjC domain-containing histone demethylation protein 1 (1076 aa).

Residues 93-265 (FSQTPLEDLV…TQLRVYQVEN (173 aa)) enclose the JmjC domain. Position 159 (threonine 159) interacts with substrate. Residues histidine 162 and aspartate 164 each contribute to the Fe cation site. Lysine 179 provides a ligand contact to substrate. A Fe cation-binding site is contributed by histidine 233. 2 disordered regions span residues 598–748 (FEEE…DPVV) and 789–1056 (KIEP…KIPS). Positions 610 to 634 (DQEEEEYDAEEPEDQEEEEEDEYQA) are enriched in acidic residues. Residues 653-680 (AKNDESEEVSVKKDKKEKMEKVEKDEKR) are compositionally biased toward basic and acidic residues. Over residues 681-698 (RNSKSKKDKISKEKKKKE) the composition is skewed to basic residues. Basic and acidic residues-rich tracts occupy residues 699-714 (RERI…ELRA) and 789-811 (KIEP…EPEH). Residues 935–946 (ASAPSSRHSSIS) show a composition bias toward low complexity. Composition is skewed to polar residues over residues 957–990 (FNSS…SINR) and 1004–1019 (DSLS…TYPT). Over residues 1044–1056 (QHHDDGHKHKIPS) the composition is skewed to basic and acidic residues.

This sequence belongs to the JHDM1 histone demethylase family. Requires Fe(2+) as cofactor.

It is found in the nucleus. The catalysed reaction is N(6),N(6)-dimethyl-L-lysyl(36)-[histone H3] + 2 2-oxoglutarate + 2 O2 = L-lysyl(36)-[histone H3] + 2 formaldehyde + 2 succinate + 2 CO2. Histone demethylase that specifically demethylates 'Lys-36' of histone H3, thereby playing a central role in histone code. Has a role in regulating lifespan. In Caenorhabditis elegans, this protein is JmjC domain-containing histone demethylation protein 1 (jhdm-1).